A 122-amino-acid chain; its full sequence is Small ribosomal subunit protein uS12c (122 aa).

This sequence belongs to the universal ribosomal protein uS12 family. In terms of assembly, part of the 30S ribosomal subunit.

The protein resides in the plastid. The protein localises to the chloroplast. With S4 and S5 plays an important role in translational accuracy. Located at the interface of the 30S and 50S subunits. This chain is Small ribosomal subunit protein uS12c (rps12), found in Chloranthus spicatus (Chulantree).